The primary structure comprises 64 residues: Disintegrin VB7A (64 aa).

The 64-residue stretch at 1-64 (NSGNPCCDPV…SDCPRNPYKD (64 aa)) folds into the Disintegrin domain. 4 disulfide bridges follow: C6–C29, C20–C26, C25–C50, and C38–C57. Positions 42-44 (RGD) match the Cell attachment site motif.

The protein belongs to the disintegrin family. Dimeric disintegrin subfamily. In terms of assembly, heterodimer with VB7B; disulfide-linked. In terms of tissue distribution, expressed by the venom gland.

It localises to the secreted. Functionally, poor inhibitor of platelet aggregation. The disintegrin inhibits the adhesion of cells expressing the RGD-dependent integrin alpha-5/beta-1 (ITGA5/ITGB1) to immobilized fibronectin. Inhibition on alpha-2b/beta-3 (ITGA2B/ITGB3) is low. The sequence is that of Disintegrin VB7A from Vipera berus berus (Common viper).